The primary structure comprises 480 residues: Aspartyl/glutamyl-tRNA(Asn/Gln) amidotransferase subunit B (480 aa).

It belongs to the GatB/GatE family. GatB subfamily. As to quaternary structure, heterotrimer of A, B and C subunits.

The enzyme catalyses L-glutamyl-tRNA(Gln) + L-glutamine + ATP + H2O = L-glutaminyl-tRNA(Gln) + L-glutamate + ADP + phosphate + H(+). It catalyses the reaction L-aspartyl-tRNA(Asn) + L-glutamine + ATP + H2O = L-asparaginyl-tRNA(Asn) + L-glutamate + ADP + phosphate + 2 H(+). Functionally, allows the formation of correctly charged Asn-tRNA(Asn) or Gln-tRNA(Gln) through the transamidation of misacylated Asp-tRNA(Asn) or Glu-tRNA(Gln) in organisms which lack either or both of asparaginyl-tRNA or glutaminyl-tRNA synthetases. The reaction takes place in the presence of glutamine and ATP through an activated phospho-Asp-tRNA(Asn) or phospho-Glu-tRNA(Gln). This Streptococcus thermophilus (strain ATCC BAA-491 / LMD-9) protein is Aspartyl/glutamyl-tRNA(Asn/Gln) amidotransferase subunit B.